Here is an 82-residue protein sequence, read N- to C-terminus: Lectin-D2 (82 aa).

Chitin-binding type-1 domains lie at 1–42 (APEC…QCDY) and 43–82 (WRCG…SQCD). Cystine bridges form between Cys4–Cys19, Cys13–Cys25, Cys18–Cys32, and Cys36–Cys40. A carbohydrate-binding residues include Ser20, Trp22, Tyr24, and Tyr31. Trp43 serves as a coordination point for a carbohydrate. 4 disulfides stabilise this stretch: Cys45/Cys60, Cys54/Cys66, Cys59/Cys73, and Cys77/Cys81. The a carbohydrate site is built by Ser61, Tyr63, Trp65, and His72.

As to quaternary structure, monomer.

N-acetyl-D-glucosamine binding lectin. Shows no hemagglutinating activity towards rabbit erythrocytes and weak activity towards trypsin-treated erythrocytes. Has mitogenic activity towards human peripheral blood lymphocytes (HPBL). In Phytolacca americana (American pokeweed), this protein is Lectin-D2.